The primary structure comprises 34 residues: Brevinin-2Rf (34 aa).

A disulfide bridge connects residues Cys28 and Cys34.

As to expression, expressed by the skin glands.

The protein localises to the secreted. Antimicrobial peptide. This Pelophylax ridibundus (Marsh frog) protein is Brevinin-2Rf.